Here is a 988-residue protein sequence, read N- to C-terminus: Chloride channel protein 1 (988 aa).

The Cytoplasmic segment spans residues 1–118 (MEQSRSQQRG…VVRRKLGEDG (118 aa)). The span at 65–75 (HKEQFSDREQD) shows a compositional bias: basic and acidic residues. A disordered region spans residues 65–92 (HKEQFSDREQDIGMPKKTGSSSTVDSKD). The chain crosses the membrane as a helical span at residues 119–150 (IFLVLLGLLMALVSWSMDYVSAKSLQAYKWSY). The Extracellular segment spans residues 151 to 158 (AQMQPSLP). A helical membrane pass occupies residues 159–179 (LQFLVWVTFPLVLILFSALFC). The Cytoplasmic segment spans residues 180-183 (HLIS). The note=Loop between two helices intramembrane region spans 184–189 (PQAVGS). Positions 188–192 (GSGIP) match the Selectivity filter part_1 motif. Residue serine 189 coordinates chloride. The segment at residues 190-195 (GIPEMK) is an intramembrane region (helical). Residues 196–208 (TILRGVVLKEYLT) are Cytoplasmic-facing. Positions 209 to 224 (MKAFVAKVVALTAGLG) form an intramembrane region, helical. The segment at residues 225 to 230 (SGIPVG) is an intramembrane region (note=Loop between two helices). Residues 230 to 234 (GKEGP) carry the Selectivity filter part_2 motif. The segment at residues 231–246 (KEGPFVHIASICAAVL) is an intramembrane region (helical). The Cytoplasmic segment spans residues 247–268 (SKFMSVFCGVYEQPYYYSDILT). 2 intramembrane regions (helical) span residues 269–280 (VGCAVGVGCCFG) and 281–290 (TPLGGVLFSI). The Cytoplasmic portion of the chain corresponds to 291–301 (EVTSTYFAVRN). A helical membrane pass occupies residues 302–321 (YWRGFFAATFSAFVFRVLAV). Over 322–347 (WNKDAVTITALFRTNFRMDFPFDLKE) the chain is Extracellular. A helical transmembrane segment spans residues 348-376 (LPAFAAIGICCGLLGAVFVYLHRQVMLGV). At 377-390 (RKHKALSQFLAKHR) the chain is on the cytoplasmic side. The chain crosses the membrane as a helical span at residues 391–408 (LLYPGIVTFVIASFTFPP). The Extracellular portion of the chain corresponds to 409–414 (GMGQFM). The note=Loop between two helices intramembrane region spans 415–418 (AGEL). The helical intramembrane region spans 419 to 426 (MPREAIST). Over 427 to 457 (LFDNNTWVKHAGDPESLGQSAVWIHPRVNVV) the chain is Extracellular. The segment at residues 458 to 475 (IIIFLFFVMKFWMSIVAT) is an intramembrane region (helical). An intramembrane region (note=Loop between two helices) is located at residues 476-482 (TMPIPCG). The short motif at 482–486 (GGFMP) is the Selectivity filter part_3 element. Positions 483–498 (GFMPVFVLGAAFGRLV) form an intramembrane region, helical. A chloride-binding site is contributed by phenylalanine 484. Residues 499–521 (GEIMAMLFPDGILFDDIIYKILP) are Extracellular-facing. The helical intramembrane region spans 522–538 (GGYAVIGAAALTGAVSH). Positions 539–540 (TV) form an intramembrane region, note=Loop between two helices. The helical intramembrane region spans 541 to 554 (STAVICFELTGQIA). Over 555–557 (HIL) the chain is Extracellular. Positions 558 to 571 (PMMVAVILANMVAQ) form an intramembrane region, helical. The note=Loop between two helices intramembrane region spans 572–575 (SLQP). An intramembrane region (helical) is located at residues 576–578 (SLY). Chloride is bound at residue tyrosine 578. At 579–988 (DSIIQVKKLP…DEEDEDELIL (410 aa)) the chain is on the cytoplasmic side. The CBS 1 domain occupies 609–668 (MVRDVKFVSASYTYGELRTLLQTTTVKTLPLVDSKDSMILLGSVERSELQALLQRHLCPE). The tract at residues 713-764 (EDEDEDLSGKSELPPSLALHPSTTAPLSPEEPNGPLPGHKQQPEAPEPAGQR) is disordered. Residues 821-876 (IDQSPFQLVEQTTLHKTHTLFSLLGLHLAYVTSMGKLRGVLALEELQKAIEGHTKS) form the CBS 2 domain. Residues 880 to 988 (LRPPLASFRN…DEEDEDELIL (109 aa)) are disordered. At serine 886 the chain carries Phosphoserine. The segment covering 887–906 (FRNTTSTRKSTGAPPSSAEN) has biased composition (polar residues). The segment covering 929–941 (TPVPSPSPEPPLS) has biased composition (pro residues). 2 stretches are compositionally biased toward acidic residues: residues 950–967 (ELEELELVESPGLEEELA) and 979–988 (DEEDEDELIL).

The protein belongs to the chloride channel (TC 2.A.49) family. ClC-1/CLCN1 subfamily. Homodimer. In terms of tissue distribution, predominantly expressed in skeletal muscles.

The protein localises to the cell membrane. It localises to the sarcolemma. It is found in the T-tubule. It carries out the reaction chloride(in) = chloride(out). The enzyme catalyses thiocyanate(in) = thiocyanate(out). The catalysed reaction is bromide(in) = bromide(out). It catalyses the reaction nitrate(in) = nitrate(out). It carries out the reaction iodide(out) = iodide(in). Modulated by membrane voltage with depolarization favouring channel opening and hyperpolarization favouring channel closure. Inhibited by acidic pH and ATP binding due to a shift of voltage dependence of common gating to more positive voltages. Inhibited by 9-anthracene-carboxylic. Its function is as follows. Voltage-gated chloride channel involved in skeletal muscle excitability. Generates most of the plasma membrane chloride conductance in skeletal muscle fibers, stabilizes the resting membrane potential and contributes to the repolarization phase during action potential firing. Forms a homodimeric channel where each subunit has its own ion conduction pathway. Conducts double-barreled currents controlled by two types of gates, two fast glutamate gates that control each subunit independently and a slow common gate that opens and shuts off both subunits simultaneously. Has a significant open probability at muscle resting potential and is further activated upon membrane depolarization. Permeable to small monovalent anions with ion selectivity for chloride &gt; thiocyanate &gt; bromide &gt; nitrate &gt; iodide. This is Chloride channel protein 1 from Homo sapiens (Human).